A 302-amino-acid chain; its full sequence is MIPNNTQFSNPIFGRILTAMVTPFKENGGVDYELAIKLANHLCENGSDGIVLCGTTGESPTLSWDEQHNLFVAVKSSLNSRSKVIVGTGSNCTSEAIEATKKAYEFGADGALVVVPYYNKPPQEGLYNHFSSIATAASDLPLMLYNIPGRTGCNLLPTTVNKLMNFPNILSIKAASGRIEEVTELRAACGPKLFIYSGDDSLLLPMLSVGAVGVVSVASHIVGLQLKMMIESFQKGEFSIALDIHEKLQPLFKALFETTNPIPIKAALELTGWQVGSPRNPLTPLIKEKKDNLFQIIQNLSL.

Residue Thr-56 coordinates pyruvate. Tyr-145 functions as the Proton donor/acceptor in the catalytic mechanism. Lys-173 functions as the Schiff-base intermediate with substrate in the catalytic mechanism. A pyruvate-binding site is contributed by Val-215.

This sequence belongs to the DapA family. As to quaternary structure, homotetramer; dimer of dimers.

The protein localises to the cytoplasm. The enzyme catalyses L-aspartate 4-semialdehyde + pyruvate = (2S,4S)-4-hydroxy-2,3,4,5-tetrahydrodipicolinate + H2O + H(+). It functions in the pathway amino-acid biosynthesis; L-lysine biosynthesis via DAP pathway; (S)-tetrahydrodipicolinate from L-aspartate: step 3/4. Its function is as follows. Catalyzes the condensation of (S)-aspartate-beta-semialdehyde [(S)-ASA] and pyruvate to 4-hydroxy-tetrahydrodipicolinate (HTPA). The polypeptide is 4-hydroxy-tetrahydrodipicolinate synthase (Prochlorococcus marinus (strain MIT 9515)).